Here is a 528-residue protein sequence, read N- to C-terminus: O-methylsterigmatocystin oxidoreductase (528 aa).

Position 440 (C440) interacts with heme.

It belongs to the cytochrome P450 family. The cofactor is heme.

The enzyme catalyses 8-O-methylsterigmatocystin + 2 reduced [NADPH--hemoprotein reductase] + 2 O2 = aflatoxin B1 + methanol + 2 oxidized [NADPH--hemoprotein reductase] + CO2 + H2O + 2 H(+). It carries out the reaction 8-O-methyldihydrosterigmatocystin + 2 reduced [NADPH--hemoprotein reductase] + 2 O2 = aflatoxin B2 + methanol + 2 oxidized [NADPH--hemoprotein reductase] + CO2 + H2O + 2 H(+). The protein operates within mycotoxin biosynthesis; aflatoxin biosynthesis. Functionally, converts O-methylsterigmatocystin (OMST) to aflatoxin B1 and converts dihydro-O-methylsterigmatocystin (DHOMST) to aflatoxin B2 in the aflatoxin biosynthesis pathway. This Aspergillus flavus protein is O-methylsterigmatocystin oxidoreductase (ordA).